A 1120-amino-acid polypeptide reads, in one-letter code: Cluster 41 polyketide synthase (1120 aa).

One can recognise a Ketosynthase family 3 (KS3) domain in the interval 7–430; that stretch reads PHDVAVVGMG…GTVSHAIIEK (424 aa). Active-site for beta-ketoacyl synthase activity residues include cysteine 178, histidine 313, and histidine 353. The interval 539 to 796 is malonyl-CoA:ACP transacylase (MAT) domain; it reads VWVFSGHGAQ…TSAISAAAED (258 aa). Residue serine 625 is the For acyl/malonyl transferase activity of the active site. The tract at residues 804–943 is ketoreductase (KR) domain; it reads IKKILSMESR…IAMQWTSWRE (140 aa). One can recognise a Carrier domain in the interval 1042–1116; that stretch reads DSLSRQVREC…HIVKWLMEKT (75 aa). Serine 1076 carries the O-(pantetheine 4'-phosphoryl)serine modification.

Functionally, polyketide synthase; part of the gene cluster 41 that mediates the biosynthesis of an extracellular and diffusible metabolite that is able to stimulate colony sclerotial production. The protein is Cluster 41 polyketide synthase of Aspergillus flavus (strain ATCC 200026 / FGSC A1120 / IAM 13836 / NRRL 3357 / JCM 12722 / SRRC 167).